The following is a 198-amino-acid chain: Transcription factor FapR (198 aa).

A MaoC-like domain is found at 102 to 168; that stretch reads TRIARGHHLF…GRTVVDVNSY (67 aa).

It belongs to the FapR family.

Transcriptional factor involved in regulation of membrane lipid biosynthesis by repressing genes involved in fatty acid and phospholipid metabolism. This is Transcription factor FapR from Geobacillus thermodenitrificans (strain NG80-2).